We begin with the raw amino-acid sequence, 417 residues long: Phosphoglycerate kinase (417 aa).

V23, D24, F25, N26, Q39, R40, S63, H64, G66, R67, L122, R123, H170, and R171 together coordinate (2R)-3-phosphoglycerate. Residue G214 coordinates ADP. Residue G214 coordinates CDP. Positions 215 and 216 each coordinate AMP. A215 is an ATP binding site. Residue A215 participates in Mg(2+) binding. D219 contacts CDP. Residue D219 participates in Mg(2+) binding. Position 220 (K220) interacts with AMP. Residue K220 participates in ATP binding. G238 serves as a coordination point for ADP. G238 provides a ligand contact to CDP. AMP contacts are provided by A239 and G313. Residues A239 and G313 each coordinate ATP. CDP contacts are provided by G338 and F343. F343 lines the ADP pocket. Position 344 (E344) interacts with AMP. ATP contacts are provided by E344, D375, and T376. D375 contributes to the Mg(2+) binding site.

Belongs to the phosphoglycerate kinase family. As to quaternary structure, monomer. Mg(2+) is required as a cofactor.

The protein localises to the cytoplasm. Its subcellular location is the mitochondrion. It carries out the reaction (2R)-3-phosphoglycerate + ATP = (2R)-3-phospho-glyceroyl phosphate + ADP. It participates in carbohydrate degradation; glycolysis; pyruvate from D-glyceraldehyde 3-phosphate: step 2/5. Functionally, catalyzes one of the two ATP producing reactions in the glycolytic pathway via the reversible conversion of 1,3-diphosphoglycerate to 3-phosphoglycerate. Both L- and D- forms of purine and pyrimidine nucleotides can be used as substrates, but the activity is much lower on pyrimidines. Negatively regulates the biosynthesis of acetyl-CoA from pyruvate in the mitochondrion. The chain is Phosphoglycerate kinase (pgkA) from Aspergillus oryzae (strain ATCC 42149 / RIB 40) (Yellow koji mold).